The sequence spans 83 residues: Small ribosomal subunit protein bS20 (83 aa).

Positions 60–83 (ASKGLIHKNKASRDKSRLAAKLAN) are disordered.

This sequence belongs to the bacterial ribosomal protein bS20 family.

In terms of biological role, binds directly to 16S ribosomal RNA. This Streptococcus thermophilus (strain CNRZ 1066) protein is Small ribosomal subunit protein bS20.